Reading from the N-terminus, the 349-residue chain is Bifunctional nitrilase/nitrile hydratase NIT4A (349 aa).

The CN hydrolase domain occupies 29–301 (VRATVVQAST…EALISADLDL (273 aa)). Glu69 serves as the catalytic Proton acceptor. Lys156 serves as the catalytic Proton donor. Cys190 serves as the catalytic Nucleophile.

It belongs to the carbon-nitrogen hydrolase superfamily. Nitrilase family. As to expression, expressed in roots, stems, cotyledons, leaves and flowers.

Its subcellular location is the cell membrane. The enzyme catalyses a nitrile + 2 H2O = a carboxylate + NH4(+). The catalysed reaction is 3-cyano-L-alanine + 2 H2O = L-aspartate + NH4(+). It catalyses the reaction L-asparagine = 3-cyano-L-alanine + H2O. In terms of biological role, highly specific for beta-cyano-L-alanine (Ala(CN)). Low activity with 3-phenylpropionitrile (PPN). Not associated with auxin production but may be involved in cyanide detoxification. The chain is Bifunctional nitrilase/nitrile hydratase NIT4A (NIT4A) from Nicotiana tabacum (Common tobacco).